Here is a 252-residue protein sequence, read N- to C-terminus: AA9 family lytic polysaccharide monooxygenase B (252 aa).

A signal peptide spans 1–20 (MVSFTKTFFAIVACALGVQA). Cu(2+)-binding residues include His21 and His106. Cys72 and Cys198 are joined by a disulfide. N-linked (GlcNAc...) asparagine glycosylation occurs at Asn158. O2 contacts are provided by His184 and Gln193. Tyr195 serves as a coordination point for Cu(2+). Asn237 is a glycosylation site (N-linked (GlcNAc...) asparagine).

Belongs to the polysaccharide monooxygenase AA9 family. Cu(2+) serves as cofactor.

Its subcellular location is the secreted. The enzyme catalyses [(1-&gt;4)-beta-D-glucosyl]n+m + reduced acceptor + O2 = 4-dehydro-beta-D-glucosyl-[(1-&gt;4)-beta-D-glucosyl]n-1 + [(1-&gt;4)-beta-D-glucosyl]m + acceptor + H2O.. Lytic polysaccharide monooxygenase (LPMO) that depolymerizes crystalline and amorphous polysaccharides via the oxidation of scissile alpha- or beta-(1-4)-glycosidic bonds, yielding C1 or C4 oxidation products. Catalysis by LPMOs requires the reduction of the active-site copper from Cu(II) to Cu(I) by a reducing agent and H(2)O(2) or O(2) as a cosubstrate. The synergistic activity of LPMO9B with xylanase Xyl10G or cellulase Cel5B shows efficient bioconversion rates of 56 and 174 percent in pretreated kenaf (Hibiscus cannabinus) and oak, respectively. In Gloeophyllum trabeum (strain ATCC 11539 / FP-39264 / Madison 617) (Brown rot fungus), this protein is AA9 family lytic polysaccharide monooxygenase B.